We begin with the raw amino-acid sequence, 200 residues long: Small ribosomal subunit protein uS4 (200 aa).

The region spanning 92 to 155 is the S4 RNA-binding domain; that stretch reads SRLDAVVYSL…QNLDIIKESV (64 aa).

The protein belongs to the universal ribosomal protein uS4 family. Part of the 30S ribosomal subunit. Contacts protein S5. The interaction surface between S4 and S5 is involved in control of translational fidelity.

Functionally, one of the primary rRNA binding proteins, it binds directly to 16S rRNA where it nucleates assembly of the body of the 30S subunit. Its function is as follows. With S5 and S12 plays an important role in translational accuracy. This Staphylococcus epidermidis (strain ATCC 35984 / DSM 28319 / BCRC 17069 / CCUG 31568 / BM 3577 / RP62A) protein is Small ribosomal subunit protein uS4.